Reading from the N-terminus, the 417-residue chain is NADH-quinone oxidoreductase subunit D (417 aa).

The protein belongs to the complex I 49 kDa subunit family. In terms of assembly, NDH-1 is composed of 14 different subunits. Subunits NuoB, C, D, E, F, and G constitute the peripheral sector of the complex.

It is found in the cell inner membrane. It catalyses the reaction a quinone + NADH + 5 H(+)(in) = a quinol + NAD(+) + 4 H(+)(out). Its function is as follows. NDH-1 shuttles electrons from NADH, via FMN and iron-sulfur (Fe-S) centers, to quinones in the respiratory chain. The immediate electron acceptor for the enzyme in this species is believed to be ubiquinone. Couples the redox reaction to proton translocation (for every two electrons transferred, four hydrogen ions are translocated across the cytoplasmic membrane), and thus conserves the redox energy in a proton gradient. The protein is NADH-quinone oxidoreductase subunit D of Paraburkholderia phymatum (strain DSM 17167 / CIP 108236 / LMG 21445 / STM815) (Burkholderia phymatum).